Reading from the N-terminus, the 191-residue chain is 3-isopropylmalate dehydratase small subunit (191 aa).

The protein belongs to the LeuD family. LeuD type 1 subfamily. As to quaternary structure, heterodimer of LeuC and LeuD.

The catalysed reaction is (2R,3S)-3-isopropylmalate = (2S)-2-isopropylmalate. It participates in amino-acid biosynthesis; L-leucine biosynthesis; L-leucine from 3-methyl-2-oxobutanoate: step 2/4. In terms of biological role, catalyzes the isomerization between 2-isopropylmalate and 3-isopropylmalate, via the formation of 2-isopropylmaleate. The chain is 3-isopropylmalate dehydratase small subunit from Staphylococcus haemolyticus (strain JCSC1435).